A 547-amino-acid polypeptide reads, in one-letter code: Chaperonin GroEL (547 aa).

ATP-binding positions include 30 to 33 (TLGP), Lys-51, 87 to 91 (DGTTT), Gly-415, and Asp-496.

This sequence belongs to the chaperonin (HSP60) family. In terms of assembly, forms a cylinder of 14 subunits composed of two heptameric rings stacked back-to-back. Interacts with the co-chaperonin GroES.

It is found in the cytoplasm. The catalysed reaction is ATP + H2O + a folded polypeptide = ADP + phosphate + an unfolded polypeptide.. Functionally, together with its co-chaperonin GroES, plays an essential role in assisting protein folding. The GroEL-GroES system forms a nano-cage that allows encapsulation of the non-native substrate proteins and provides a physical environment optimized to promote and accelerate protein folding. This chain is Chaperonin GroEL, found in Pelodictyon phaeoclathratiforme (strain DSM 5477 / BU-1).